The chain runs to 449 residues: UDP-N-acetylmuramoylalanine--D-glutamate ligase (449 aa).

118–124 contributes to the ATP binding site; it reads GTNGKTT.

It belongs to the MurCDEF family.

The protein localises to the cytoplasm. The catalysed reaction is UDP-N-acetyl-alpha-D-muramoyl-L-alanine + D-glutamate + ATP = UDP-N-acetyl-alpha-D-muramoyl-L-alanyl-D-glutamate + ADP + phosphate + H(+). Its pathway is cell wall biogenesis; peptidoglycan biosynthesis. Its function is as follows. Cell wall formation. Catalyzes the addition of glutamate to the nucleotide precursor UDP-N-acetylmuramoyl-L-alanine (UMA). The protein is UDP-N-acetylmuramoylalanine--D-glutamate ligase of Staphylococcus carnosus (strain TM300).